The chain runs to 154 residues: Peptide deformylase (154 aa).

Residues cysteine 90 and histidine 132 each contribute to the Fe cation site. Residue glutamate 133 is part of the active site. Residue histidine 136 coordinates Fe cation.

It belongs to the polypeptide deformylase family. The cofactor is Fe(2+).

The catalysed reaction is N-terminal N-formyl-L-methionyl-[peptide] + H2O = N-terminal L-methionyl-[peptide] + formate. Removes the formyl group from the N-terminal Met of newly synthesized proteins. Requires at least a dipeptide for an efficient rate of reaction. N-terminal L-methionine is a prerequisite for activity but the enzyme has broad specificity at other positions. This chain is Peptide deformylase, found in Halothermothrix orenii (strain H 168 / OCM 544 / DSM 9562).